The primary structure comprises 437 residues: Methionine aminopeptidase 2 (437 aa).

A disordered region spans residues 1–90 (MAAQAAPAEE…LFPNNQYPKG (90 aa)). Positions 10–20 (ELSKLSVDETK) are enriched in basic and acidic residues. Over residues 31 to 42 (SDAESGDEEAEE) the composition is skewed to acidic residues. Positions 52 to 66 (AKKKKKRKPKKKKKA) are enriched in basic residues. His190 lines the substrate pocket. Asp210, Asp221, and His290 together coordinate a divalent metal cation. Position 298 (His298) interacts with substrate. A divalent metal cation contacts are provided by Glu323 and Glu418.

It belongs to the peptidase M24A family. Methionine aminopeptidase eukaryotic type 2 subfamily. The cofactor is Co(2+). It depends on Zn(2+) as a cofactor. Mn(2+) serves as cofactor. Fe(2+) is required as a cofactor.

It localises to the cytoplasm. It catalyses the reaction Release of N-terminal amino acids, preferentially methionine, from peptides and arylamides.. Its function is as follows. Cotranslationally removes the N-terminal methionine from nascent proteins. The N-terminal methionine is often cleaved when the second residue in the primary sequence is small and uncharged (Met-Ala-, Cys, Gly, Pro, Ser, Thr, or Val). The sequence is that of Methionine aminopeptidase 2 from Neurospora crassa (strain ATCC 24698 / 74-OR23-1A / CBS 708.71 / DSM 1257 / FGSC 987).